We begin with the raw amino-acid sequence, 144 residues long: MSDKQQQKHKQKARQARVKAQINRDKARRNLLRQREKLARRRTRNRKQSEPRRDDSDGDDTDGETVKNPAAHSTMPPQKSNAENAVRNSHSTVPKTPKYSDVTARERLYGQRLHQKTAGGNSEASAPSDESASGSPTEDEVNDE.

The segment at 1-144 (MSDKQQQKHK…SPTEDEVNDE (144 aa)) is disordered. Basic residues-rich tracts occupy residues 7-17 (QKHKQKARQAR) and 26-46 (KARR…TRNR). Over residues 75–94 (MPPQKSNAENAVRNSHSTVP) the composition is skewed to polar residues. Positions 122–136 (SEASAPSDESASGSP) are enriched in low complexity.

Belongs to the gas vesicle GvpI family. As to quaternary structure, gvpF to GvpM interact with each other in vitro, and may form multi-subunit complex(es). Interacts with GvpC1 and GvpO.

It is found in the gas vesicle. Functionally, proteins GvpF to GvpM might be involved in nucleating gas vesicle formation. A minor component of the gas vesicle. Gas vesicles are hollow, gas filled proteinaceous nanostructures found in several microbial planktonic microorganisms. They allow positioning of halobacteria at the optimal depth for growth in the poorly aerated, shallow brine pools of their habitat. Its function is as follows. Expression of a 9.5 kb p-vac DNA fragment containing 2 divergently transcribed regions (gvpD-gvpE-gvpF-gvpG-gvpH-gvpI-gvpJ-gvpK-gvpL-gvpM and gvpA-gvpC-gvpN-gvpO) allows H.volcanii to produce gas vesicles. A similar region restores gas vesicle production in H.halobium without the p-vac locus, but it still has the c-vac locus. In Halobacterium salinarum (strain ATCC 700922 / JCM 11081 / NRC-1) (Halobacterium halobium), this protein is Gas vesicle protein I1 (gvpI11).